We begin with the raw amino-acid sequence, 99 residues long: DNA-directed RNA polymerase subunit omega (99 aa).

The protein belongs to the RNA polymerase subunit omega family. In terms of assembly, the RNAP catalytic core consists of 2 alpha, 1 beta, 1 beta' and 1 omega subunit. When a sigma factor is associated with the core the holoenzyme is formed, which can initiate transcription.

It catalyses the reaction RNA(n) + a ribonucleoside 5'-triphosphate = RNA(n+1) + diphosphate. Promotes RNA polymerase assembly. Latches the N- and C-terminal regions of the beta' subunit thereby facilitating its interaction with the beta and alpha subunits. The polypeptide is DNA-directed RNA polymerase subunit omega (Thermus thermophilus (strain ATCC BAA-163 / DSM 7039 / HB27)).